The chain runs to 1075 residues: Paired amphipathic helix protein pst2 (1075 aa).

PAH domains lie at 28–102 (SPNG…LPSS), 138–208 (LPCT…LPSS), and 243–319 (RPDN…TSLS). Phosphoserine is present on residues S641 and S643. The tract at residues 647 to 700 (LTEFVKQPKINGQRESRSAAAARKKEESGNKSQSNSQNSLSDESGNVTPVSKKQ) is disordered. Basic and acidic residues predominate over residues 658-675 (GQRESRSAAAARKKEESG). Residues 676 to 691 (NKSQSNSQNSLSDESG) are compositionally biased toward low complexity.

As to quaternary structure, heterotetramer of alp13, clr6, prw1 and pst2.

It is found in the nucleus. Functionally, has a role in chromatin assembly and chromosome segregation. Involved in the deacetylation of histones. This is Paired amphipathic helix protein pst2 (pst2) from Schizosaccharomyces pombe (strain 972 / ATCC 24843) (Fission yeast).